Consider the following 984-residue polypeptide: Lateral signaling target protein 2 homolog (984 aa).

Disordered stretches follow at residues 308–462 (PLGS…DTDE), 508–527 (YGTTEQQGHQGLEEEEPSTS), 539–642 (RLRL…SSLS), and 749–900 (DNVF…SPPA). Composition is skewed to low complexity over residues 326-356 (TTSSSQNNNNSSNNNHSSSSSTTTTMGTTST), 369-380 (NNHNSNSNSSTN), 387-404 (TLRSPSMLSLSPTSTPTA), and 412-433 (PSHSIASTSSAATSSTNPPADW). The segment covering 434 to 462 (SDGDDEDEDDDDIEVDEEDLESSDDDTDE) has biased composition (acidic residues). S544 and S545 each carry phosphoserine. Basic residues predominate over residues 571–611 (RESHSHRHHQRHHHHHHHRHSHQHQHRQPHPHRTTRSGRKR). The span at 630-642 (LASGDTSAASSLS) shows a compositional bias: low complexity. 2 stretches are compositionally biased toward polar residues: residues 760–779 (ATGQRHSAGASMQRNNTIDL) and 789–806 (SGATMATSRSHVTRSRSL). Position 805 is a phosphoserine (S805). Composition is skewed to low complexity over residues 811–869 (AASS…PVSA) and 886–899 (PSSATSTSATLSPP). Residues 904 to 964 (DGKAPRCMAC…VCRDCYVREV (61 aa)) form an FYVE-type zinc finger. C910, C913, C926, C929, C934, C937, C956, and C959 together coordinate Zn(2+).

It belongs to the lst-2 family.

Its function is as follows. Negative regulator of epidermal growth factor receptor (EGFR) signaling. The sequence is that of Lateral signaling target protein 2 homolog from Drosophila yakuba (Fruit fly).